Consider the following 294-residue polypeptide: Elongation factor Ts (294 aa).

An involved in Mg(2+) ion dislocation from EF-Tu region spans residues 79–82 (TDFV).

This sequence belongs to the EF-Ts family.

It is found in the cytoplasm. Its function is as follows. Associates with the EF-Tu.GDP complex and induces the exchange of GDP to GTP. It remains bound to the aminoacyl-tRNA.EF-Tu.GTP complex up to the GTP hydrolysis stage on the ribosome. The polypeptide is Elongation factor Ts (Shouchella clausii (strain KSM-K16) (Alkalihalobacillus clausii)).